Reading from the N-terminus, the 150-residue chain is Cytochrome c oxidase subunit 5A, mitochondrial (150 aa).

The transit peptide at 1-41 (MLGAALRRCAVAATTRAGPRGLLHSARTPGPAAAIQSVRCY) directs the protein to the mitochondrion. Positions 2 to 17 (LGAALRRCAVAATTRA) match the SIFI-degron motif. Lysine 87 and lysine 113 each carry N6-acetyllysine. The residue at position 141 (threonine 141) is a Phosphothreonine.

Belongs to the cytochrome c oxidase subunit 5A family. In terms of assembly, component of the cytochrome c oxidase (complex IV, CIV), a multisubunit enzyme composed of 14 subunits. The complex is composed of a catalytic core of 3 subunits MT-CO1, MT-CO2 and MT-CO3, encoded in the mitochondrial DNA, and 11 supernumerary subunits COX4I, COX5A, COX5B, COX6A, COX6B, COX6C, COX7A, COX7B, COX7C, COX8 and NDUFA4, which are encoded in the nuclear genome. The complex exists as a monomer or a dimer and forms supercomplexes (SCs) in the inner mitochondrial membrane with NADH-ubiquinone oxidoreductase (complex I, CI) and ubiquinol-cytochrome c oxidoreductase (cytochrome b-c1 complex, complex III, CIII), resulting in different assemblies (supercomplex SCI(1)III(2)IV(1) and megacomplex MCI(2)III(2)IV(2)). Interacts with AFG1L. Interacts with RAB5IF. In terms of processing, in response to mitochondrial stress, the precursor protein is ubiquitinated by the SIFI complex in the cytoplasm before mitochondrial import, leading to its degradation. Within the SIFI complex, UBR4 initiates ubiquitin chain that are further elongated or branched by KCMF1.

Its subcellular location is the mitochondrion inner membrane. The protein operates within energy metabolism; oxidative phosphorylation. In terms of biological role, component of the cytochrome c oxidase, the last enzyme in the mitochondrial electron transport chain which drives oxidative phosphorylation. The respiratory chain contains 3 multisubunit complexes succinate dehydrogenase (complex II, CII), ubiquinol-cytochrome c oxidoreductase (cytochrome b-c1 complex, complex III, CIII) and cytochrome c oxidase (complex IV, CIV), that cooperate to transfer electrons derived from NADH and succinate to molecular oxygen, creating an electrochemical gradient over the inner membrane that drives transmembrane transport and the ATP synthase. Cytochrome c oxidase is the component of the respiratory chain that catalyzes the reduction of oxygen to water. Electrons originating from reduced cytochrome c in the intermembrane space (IMS) are transferred via the dinuclear copper A center (CU(A)) of subunit 2 and heme A of subunit 1 to the active site in subunit 1, a binuclear center (BNC) formed by heme A3 and copper B (CU(B)). The BNC reduces molecular oxygen to 2 water molecules using 4 electrons from cytochrome c in the IMS and 4 protons from the mitochondrial matrix. In Gorilla gorilla gorilla (Western lowland gorilla), this protein is Cytochrome c oxidase subunit 5A, mitochondrial (COX5A).